The chain runs to 355 residues: Peptide chain release factor 1 (355 aa).

The residue at position 231 (Gln231) is an N5-methylglutamine. Over residues 283 to 292 (LAKETSERKS) the composition is skewed to basic and acidic residues. The segment at 283 to 306 (LAKETSERKSQVGTGDRSGRIRTY) is disordered.

It belongs to the prokaryotic/mitochondrial release factor family. Methylated by PrmC. Methylation increases the termination efficiency of RF1.

The protein resides in the cytoplasm. Its function is as follows. Peptide chain release factor 1 directs the termination of translation in response to the peptide chain termination codons UAG and UAA. The sequence is that of Peptide chain release factor 1 from Campylobacter concisus (strain 13826).